The primary structure comprises 422 residues: Gamma-glutamyl phosphate reductase (422 aa).

It belongs to the gamma-glutamyl phosphate reductase family.

It is found in the cytoplasm. It catalyses the reaction L-glutamate 5-semialdehyde + phosphate + NADP(+) = L-glutamyl 5-phosphate + NADPH + H(+). It functions in the pathway amino-acid biosynthesis; L-proline biosynthesis; L-glutamate 5-semialdehyde from L-glutamate: step 2/2. Functionally, catalyzes the NADPH-dependent reduction of L-glutamate 5-phosphate into L-glutamate 5-semialdehyde and phosphate. The product spontaneously undergoes cyclization to form 1-pyrroline-5-carboxylate. This is Gamma-glutamyl phosphate reductase from Chlorobium phaeovibrioides (strain DSM 265 / 1930) (Prosthecochloris vibrioformis (strain DSM 265)).